We begin with the raw amino-acid sequence, 118 residues long: V-type proton ATPase subunit G 3 (118 aa).

Polar residues predominate over residues 1-12; sequence MASQSQGIQQLL. The disordered stretch occupies residues 1–37; that stretch reads MASQSQGIQQLLQAEKRAKDKLEEAKKRKNKRLRQAK. Residues 3 to 53 adopt a coiled-coil conformation; that stretch reads SQSQGIQQLLQAEKRAKDKLEEAKKRKNKRLRQAKEEATADIDQYRLKREG. Basic and acidic residues predominate over residues 14-26; sequence AEKRAKDKLEEAK.

This sequence belongs to the V-ATPase G subunit family. As to quaternary structure, V-ATPase is a heteromultimeric enzyme made up of two complexes: the ATP-hydrolytic V1 complex and the proton translocation V0 complex. The V1 complex consists of three catalytic AB heterodimers that form a heterohexamer, three peripheral stalks each consisting of EG heterodimers, one central rotor including subunits D and F, and the regulatory subunits C and H. The proton translocation complex V0 consists of the proton transport subunit a, a ring of proteolipid subunits c9c'', rotary subunit d, subunits e and f, and two accessory subunits.

Subunit of the V1 complex of vacuolar(H+)-ATPase (V-ATPase), a multisubunit enzyme composed of a peripheral complex (V1) that hydrolyzes ATP and a membrane integral complex (V0) that translocates protons. V-ATPase is responsible for acidifying and maintaining the pH of intracellular compartments and in some cell types, is targeted to the plasma membrane, where it is responsible for acidifying the extracellular environment. This chain is V-type proton ATPase subunit G 3 (atp6v1g3), found in Xenopus tropicalis (Western clawed frog).